The chain runs to 277 residues: uncharacterized protein (277 aa).

This is an uncharacterized protein from Methanocaldococcus jannaschii (strain ATCC 43067 / DSM 2661 / JAL-1 / JCM 10045 / NBRC 100440) (Methanococcus jannaschii).